The primary structure comprises 85 residues: NAD(P)H-quinone oxidoreductase subunit O (85 aa).

The protein belongs to the complex I NdhO subunit family. NDH-1 can be composed of about 15 different subunits; different subcomplexes with different compositions have been identified which probably have different functions.

The protein localises to the cellular thylakoid membrane. It carries out the reaction a plastoquinone + NADH + (n+1) H(+)(in) = a plastoquinol + NAD(+) + n H(+)(out). It catalyses the reaction a plastoquinone + NADPH + (n+1) H(+)(in) = a plastoquinol + NADP(+) + n H(+)(out). In terms of biological role, NDH-1 shuttles electrons from an unknown electron donor, via FMN and iron-sulfur (Fe-S) centers, to quinones in the respiratory and/or the photosynthetic chain. The immediate electron acceptor for the enzyme in this species is believed to be plastoquinone. Couples the redox reaction to proton translocation, and thus conserves the redox energy in a proton gradient. Cyanobacterial NDH-1 also plays a role in inorganic carbon-concentration. The polypeptide is NAD(P)H-quinone oxidoreductase subunit O (Synechococcus sp. (strain CC9311)).